A 256-amino-acid polypeptide reads, in one-letter code: Imidazole glycerol phosphate synthase subunit HisF (256 aa).

Residues D12 and D131 contribute to the active site.

Belongs to the HisA/HisF family. In terms of assembly, heterodimer of HisH and HisF.

Its subcellular location is the cytoplasm. It carries out the reaction 5-[(5-phospho-1-deoxy-D-ribulos-1-ylimino)methylamino]-1-(5-phospho-beta-D-ribosyl)imidazole-4-carboxamide + L-glutamine = D-erythro-1-(imidazol-4-yl)glycerol 3-phosphate + 5-amino-1-(5-phospho-beta-D-ribosyl)imidazole-4-carboxamide + L-glutamate + H(+). The protein operates within amino-acid biosynthesis; L-histidine biosynthesis; L-histidine from 5-phospho-alpha-D-ribose 1-diphosphate: step 5/9. Functionally, IGPS catalyzes the conversion of PRFAR and glutamine to IGP, AICAR and glutamate. The HisF subunit catalyzes the cyclization activity that produces IGP and AICAR from PRFAR using the ammonia provided by the HisH subunit. This Pseudomonas paraeruginosa (strain DSM 24068 / PA7) (Pseudomonas aeruginosa (strain PA7)) protein is Imidazole glycerol phosphate synthase subunit HisF.